The primary structure comprises 416 residues: 4-hydroxy-3-methylbut-2-en-1-yl diphosphate synthase (flavodoxin) (416 aa).

[4Fe-4S] cluster-binding residues include Cys304, Cys307, Cys350, and Glu357.

It belongs to the IspG family. It depends on [4Fe-4S] cluster as a cofactor.

The enzyme catalyses (2E)-4-hydroxy-3-methylbut-2-enyl diphosphate + oxidized [flavodoxin] + H2O + 2 H(+) = 2-C-methyl-D-erythritol 2,4-cyclic diphosphate + reduced [flavodoxin]. It participates in isoprenoid biosynthesis; isopentenyl diphosphate biosynthesis via DXP pathway; isopentenyl diphosphate from 1-deoxy-D-xylulose 5-phosphate: step 5/6. Converts 2C-methyl-D-erythritol 2,4-cyclodiphosphate (ME-2,4cPP) into 1-hydroxy-2-methyl-2-(E)-butenyl 4-diphosphate. This is 4-hydroxy-3-methylbut-2-en-1-yl diphosphate synthase (flavodoxin) from Burkholderia pseudomallei (strain K96243).